The following is a 285-amino-acid chain: Nucleotide-binding protein PSPPH_4154 (285 aa).

8-15 provides a ligand contact to ATP; it reads GRSGSGKS. GTP is bound at residue 60-63; it reads DARN.

It belongs to the RapZ-like family.

Functionally, displays ATPase and GTPase activities. The chain is Nucleotide-binding protein PSPPH_4154 from Pseudomonas savastanoi pv. phaseolicola (strain 1448A / Race 6) (Pseudomonas syringae pv. phaseolicola (strain 1448A / Race 6)).